Consider the following 416-residue polypeptide: UDP-N-acetylglucosamine 1-carboxyvinyltransferase (416 aa).

Residue lysine 22–asparagine 23 participates in phosphoenolpyruvate binding. Arginine 91 is a UDP-N-acetyl-alpha-D-glucosamine binding site. Cysteine 115 serves as the catalytic Proton donor. 2-(S-cysteinyl)pyruvic acid O-phosphothioketal is present on cysteine 115. Residues arginine 120–leucine 124, aspartate 305, and isoleucine 327 each bind UDP-N-acetyl-alpha-D-glucosamine.

The protein belongs to the EPSP synthase family. MurA subfamily.

It is found in the cytoplasm. The catalysed reaction is phosphoenolpyruvate + UDP-N-acetyl-alpha-D-glucosamine = UDP-N-acetyl-3-O-(1-carboxyvinyl)-alpha-D-glucosamine + phosphate. Its pathway is cell wall biogenesis; peptidoglycan biosynthesis. Functionally, cell wall formation. Adds enolpyruvyl to UDP-N-acetylglucosamine. The polypeptide is UDP-N-acetylglucosamine 1-carboxyvinyltransferase (Buchnera aphidicola subsp. Acyrthosiphon pisum (strain 5A)).